The primary structure comprises 144 residues: Large ribosomal subunit protein uL13 (144 aa).

Belongs to the universal ribosomal protein uL13 family. Part of the 50S ribosomal subunit.

Its function is as follows. This protein is one of the early assembly proteins of the 50S ribosomal subunit, although it is not seen to bind rRNA by itself. It is important during the early stages of 50S assembly. In Syntrophomonas wolfei subsp. wolfei (strain DSM 2245B / Goettingen), this protein is Large ribosomal subunit protein uL13.